An 887-amino-acid polypeptide reads, in one-letter code: MNSGGGLPPPSAAASPSSSSLAAAVAVVAPPGVGGVPGGAAVGVKLKYCRYYAKDKTCFYGEECQFLHEDPAAGAAPGLGLHSNSVPLALAGAPVAGFPPGAVAGGGAGPPPGPKKPDLGDPGTGAAAGGGGSSGGLDGPRLAIPGMDGGALTDTSLTDSYFSTSFIGVNGFGSPVETKYPLMQRMTNSSSSPSLLNDSAKPYSAHDPLTSPASSLFNDFGALNISQRRKPRKYRLGMLEERLVPMGSKARKAKNPIGCLADRCKSGVPINMVWWNRVTENNLQTPNPTASEFIPKGGSTSRLSNVSQSNMSAFSQVFSHPSMGSPATAGLAPGMSLSAGSSPLHSPKITPHTSPAPRRRSHTPNPASYMVPSSASTSVNNPVSQTPSSGQVIQKETVGGTTYFYTDTTPAPLTGMVFPNYHIYPPTAPHVAYMQPKANAPSFFMADELRQELINRHLITMAQIDQADMPAVPTEVDSYHSLFPLEPLPPPNRIQKSSNFGYITSCYKAVNSKDDLPYCLRRIHGFRLVNTKCMVLVDMWKKIQHSNIVTLREVFTTKAFAEPSLVFAYDFHAGGETMMSRHFNDPNADAYFTKRKWGQHEGPLPRQHAGLLPESLIWAYIVQLSSALRTIHTAGLACRVMDPTKILITGKTRLRVNCVGVFDVLTFDNSQNNNPLALMAQYQQADLISLGKVVLALACNSLAGIQRENLQKAMELVTINYSSDLKNLILYLLTDQNRMRSVNDIMPMIGARFYTQLDAAQMRNDVIEEDLAKEVQNGRLFRLLAKLGTINERPEFQKDPTWSETGDRYLLKLFRDHLFHQVTEAGAPWIDLSHIISCLNKLDAGVPEKISLISRDEKSVLVVTYSDLKRCFENTFQELIAAANGQL.

Residues 43–71 (GVKLKYCRYYAKDKTCFYGEECQFLHEDP) form a C3H1-type zinc finger. 3 disordered regions span residues 102 to 147 (AVAG…IPGM), 284 to 307 (QTPN…SNVS), and 325 to 392 (SPAT…SGQV). Residues 122-138 (PGTGAAAGGGGSSGGLD) show a composition bias toward gly residues. The necessary and sufficient for interaction with PABPC1 but not needed for interaction with PAN2 stretch occupies residues 147–498 (MDGGALTDTS…PPPNRIQKSS (352 aa)). A PABPC-interacting motif-2 (PAM-2) motif is present at residues 284–299 (QTPNPTASEFIPKGGS). The span at 298-307 (GSTSRLSNVS) shows a compositional bias: polar residues. A phosphoserine mark is found at serine 354 and serine 361. Residues 363–392 (TPNPASYMVPSSASTSVNNPVSQTPSSGQV) show a composition bias toward polar residues. The segment at 463 to 750 (QIDQADMPAV…SVNDIMPMIG (288 aa)) is pseudokinase domain. Residues arginine 521, 570–577 (DFHAGGET), and 644–645 (TK) each bind ATP. Residues 751–789 (ARFYTQLDAAQMRNDVIEEDLAKEVQNGRLFRLLAKLGT) are a coiled coil. Positions 790–887 (INERPEFQKD…ELIAAANGQL (98 aa)) are knob domain.

Belongs to the protein kinase superfamily. PAN3 family. In terms of assembly, homodimer. Forms a heterotrimer with a catalytic subunit PAN2 to form the poly(A)-nuclease (PAN) deadenylation complex. Interacts (via PAM-2 motif) with poly(A)-binding protein PABPC1 (via PABC domain), conferring substrate specificity of the enzyme complex. Interacts with the GW182 family proteins TNRC6A, TNRC6B and TNRC6. Interacts with YTHDF3. As to quaternary structure, interacts with PAN2. Interacts (via N-terminus) with PABPC1 at lower efficiency than isoform 3. Interacts with PAN2. Interacts (via N-terminus) with PABPC1 at higher efficiency than isoform 1.

The protein resides in the cytoplasm. It is found in the P-body. The protein localises to the nucleus. Functionally, regulatory subunit of the poly(A)-nuclease (PAN) deadenylation complex, one of two cytoplasmic mRNA deadenylases involved in general and miRNA-mediated mRNA turnover. PAN specifically shortens poly(A) tails of RNA and the activity is stimulated by poly(A)-binding protein (PABP). PAN deadenylation is followed by rapid degradation of the shortened mRNA tails by the CCR4-NOT complex. Deadenylated mRNAs are then degraded by two alternative mechanisms, namely exosome-mediated 3'-5' exonucleolytic degradation, or deadenylation-dependent mRNA decapping and subsequent 5'-3' exonucleolytic degradation by XRN1. PAN3 acts as a regulator for PAN activity, recruiting the catalytic subunit PAN2 to mRNA via its interaction with RNA and PABP, and to miRNA targets via its interaction with GW182 family proteins. In terms of biological role, decreases PAN2-mediated deadenylation, possibly by preventing progression into the second CCR4-NOT mediated stage of biphasic deadenylation. Has a significant effect on mRNA stability, generally stabilizing a subset of the transcriptome. Stabilizes mRNAs degraded by the AU-rich element (ARE)-mediated mRNA decay pathway but promotes degradation of mRNAs by the microRNA-mediated pathway. Its activity influences mRNP remodeling, specifically reducing formation of a subset of P-bodies containing GW220, an isoform of TNRC6A. Its function is as follows. Enhances PAN2 deadenylase activity and has an extensive effect on mRNA stability, generally enhancing mRNA decay across the transcriptome by multiple pathways, including the AU-rich element (ARE)-mediated pathway, microRNA-mediated pathway and the nonsense-mediated pathway (NMD). Its activity is required for efficient P-body formation. May be involved in regulating mRNAs of genes involved in cell cycle progression and cell proliferation. The protein is PAN2-PAN3 deadenylation complex subunit PAN3 of Homo sapiens (Human).